A 251-amino-acid polypeptide reads, in one-letter code: Triosephosphate isomerase (251 aa).

9–11 (NWK) provides a ligand contact to substrate. The active-site Electrophile is the His-95. The Proton acceptor role is filled by Glu-167. Substrate is bound by residues Gly-173, Ser-213, and 234–235 (GG). Ser-213 carries the post-translational modification Phosphoserine.

This sequence belongs to the triosephosphate isomerase family. As to quaternary structure, homodimer.

It is found in the cytoplasm. The enzyme catalyses D-glyceraldehyde 3-phosphate = dihydroxyacetone phosphate. Its pathway is carbohydrate biosynthesis; gluconeogenesis. It functions in the pathway carbohydrate degradation; glycolysis; D-glyceraldehyde 3-phosphate from glycerone phosphate: step 1/1. Its function is as follows. Involved in the gluconeogenesis. Catalyzes stereospecifically the conversion of dihydroxyacetone phosphate (DHAP) to D-glyceraldehyde-3-phosphate (G3P). The polypeptide is Triosephosphate isomerase (Bacillus mycoides (strain KBAB4) (Bacillus weihenstephanensis)).